The following is a 505-amino-acid chain: ATP synthase subunit alpha (505 aa).

Glycine 169 to threonine 176 lines the ATP pocket.

The protein belongs to the ATPase alpha/beta chains family. In terms of assembly, F-type ATPases have 2 components, CF(1) - the catalytic core - and CF(0) - the membrane proton channel. CF(1) has five subunits: alpha(3), beta(3), gamma(1), delta(1), epsilon(1). CF(0) has three main subunits: a(1), b(2) and c(9-12). The alpha and beta chains form an alternating ring which encloses part of the gamma chain. CF(1) is attached to CF(0) by a central stalk formed by the gamma and epsilon chains, while a peripheral stalk is formed by the delta and b chains.

The protein resides in the cell membrane. The enzyme catalyses ATP + H2O + 4 H(+)(in) = ADP + phosphate + 5 H(+)(out). In terms of biological role, produces ATP from ADP in the presence of a proton gradient across the membrane. The alpha chain is a regulatory subunit. The polypeptide is ATP synthase subunit alpha (Alkaliphilus oremlandii (strain OhILAs) (Clostridium oremlandii (strain OhILAs))).